We begin with the raw amino-acid sequence, 274 residues long: Thiamine kinase (274 aa).

The protein belongs to the thiamine kinase family.

The enzyme catalyses thiamine + ATP = thiamine phosphate + ADP + H(+). It participates in cofactor biosynthesis; thiamine diphosphate biosynthesis; thiamine phosphate from thiamine: step 1/1. Its function is as follows. Catalyzes the ATP-dependent phosphorylation of thiamine to thiamine phosphate. Is involved in thiamine salvage. The sequence is that of Thiamine kinase from Shigella flexneri serotype 5b (strain 8401).